Here is a 271-residue protein sequence, read N- to C-terminus: Eukaryotic translation initiation factor 3 subunit G (271 aa).

Disordered stretches follow at residues 1–29 (MPALDDIKSSWADEVESDSGSLPPPSEVI) and 143–185 (KPTK…MRGR). Positions 189 to 267 (SAIRISNLSE…LILSVEWSKP (79 aa)) constitute an RRM domain.

It belongs to the eIF-3 subunit G family. Component of the eukaryotic translation initiation factor 3 (eIF-3) complex.

It localises to the cytoplasm. Functionally, RNA-binding component of the eukaryotic translation initiation factor 3 (eIF-3) complex, which is involved in protein synthesis of a specialized repertoire of mRNAs and, together with other initiation factors, stimulates binding of mRNA and methionyl-tRNAi to the 40S ribosome. The eIF-3 complex specifically targets and initiates translation of a subset of mRNAs involved in cell proliferation. This subunit can bind 18S rRNA. The chain is Eukaryotic translation initiation factor 3 subunit G from Anopheles gambiae (African malaria mosquito).